Reading from the N-terminus, the 432-residue chain is 23S rRNA (uracil(1939)-C(5))-methyltransferase RlmD (432 aa).

The TRAM domain maps to 1 to 54 (MNPVVDILSLDHEGHGVARLDGKVTFVDGALAGERAEIAIFRKHAKYNSANAVA). Residues Cys-67, Cys-73, Cys-76, and Cys-155 each coordinate [4Fe-4S] cluster. Positions 264, 293, 298, 314, 341, and 362 each coordinate S-adenosyl-L-methionine. Cys-389 (nucleophile) is an active-site residue.

The protein belongs to the class I-like SAM-binding methyltransferase superfamily. RNA M5U methyltransferase family. RlmD subfamily.

The enzyme catalyses uridine(1939) in 23S rRNA + S-adenosyl-L-methionine = 5-methyluridine(1939) in 23S rRNA + S-adenosyl-L-homocysteine + H(+). Functionally, catalyzes the formation of 5-methyl-uridine at position 1939 (m5U1939) in 23S rRNA. The protein is 23S rRNA (uracil(1939)-C(5))-methyltransferase RlmD of Thiobacillus denitrificans (strain ATCC 25259 / T1).